A 282-amino-acid polypeptide reads, in one-letter code: Large ribosomal subunit protein uL2 (282 aa).

Disordered regions lie at residues 26–55 (KKSP…RHRG) and 218–266 (PHVR…HNKS). Polar residues predominate over residues 34 to 43 (LESQSHTAGR). Basic residues predominate over residues 254–266 (TIGKKTRNKHNKS).

It belongs to the universal ribosomal protein uL2 family. In terms of assembly, part of the 50S ribosomal subunit. Forms a bridge to the 30S subunit in the 70S ribosome.

One of the primary rRNA binding proteins. Required for association of the 30S and 50S subunits to form the 70S ribosome, for tRNA binding and peptide bond formation. It has been suggested to have peptidyltransferase activity; this is somewhat controversial. Makes several contacts with the 16S rRNA in the 70S ribosome. In Pediococcus pentosaceus (strain ATCC 25745 / CCUG 21536 / LMG 10740 / 183-1w), this protein is Large ribosomal subunit protein uL2.